The following is a 126-amino-acid chain: uncharacterized protein (126 aa).

This sequence belongs to the SufE family.

This is an uncharacterized protein from Haemophilus influenzae (strain ATCC 51907 / DSM 11121 / KW20 / Rd).